The chain runs to 118 residues: Class II hydrophobin CRP (118 aa).

The signal sequence occupies residues methionine 1 to arginine 22. The segment at alanine 20–threonine 46 is disordered. A compositionally biased stretch (gly residues) spans arginine 22–serine 45. Tandem repeats lie at residues serine 29–glycine 30, serine 31–glycine 32, serine 33–glycine 34, serine 35–glycine 36, serine 37–glycine 38, serine 39–glycine 40, and serine 41–glycine 42. The tract at residues serine 29–glycine 42 is 7 X 2 AA tandem repeats of S-G. 4 disulfides stabilise this stretch: cysteine 51–cysteine 100, cysteine 61–cysteine 91, cysteine 62–cysteine 74, and cysteine 101–cysteine 112.

The protein belongs to the cerato-ulmin hydrophobin family. In terms of assembly, homotetramer. Further self-assembles to form highly ordered films at water-air interfaces through intermolecular interactions.

Its subcellular location is the secreted. It is found in the cell wall. Its function is as follows. Aerial growth, conidiation, and dispersal of filamentous fungi in the environment rely upon a capability of their secreting small amphipathic proteins called hydrophobins (HPBs) with low sequence identity. Class I can self-assemble into an outermost layer of rodlet bundles on aerial cell surfaces, conferring cellular hydrophobicity that supports fungal growth, development and dispersal; whereas Class II form highly ordered films at water-air interfaces through intermolecular interactions but contribute nothing to the rodlet structure. Cryparin is a class II hydrophobin that is the most abundant protein produced by this fungus when grown in liquid culture and that plays an essential role in the fitness of this important plant pathogen by facilitating the eruption of the fungal fruiting bodies through the bark of its host tree. This Cryphonectria parasitica (Chestnut blight fungus) protein is Class II hydrophobin CRP.